The sequence spans 475 residues: Ribulose bisphosphate carboxylase large chain (475 aa).

A propeptide spanning residues 1 to 2 (MS) is cleaved from the precursor. Pro-3 is modified (N-acetylproline). At Lys-14 the chain carries N6,N6,N6-trimethyllysine. Asn-123 and Thr-173 together coordinate substrate. The active-site Proton acceptor is Lys-175. Substrate is bound at residue Lys-177. Positions 201, 203, and 204 each coordinate Mg(2+). Lys-201 is subject to N6-carboxylysine. His-294 (proton acceptor) is an active-site residue. The substrate site is built by Arg-295, His-327, and Ser-379.

Belongs to the RuBisCO large chain family. Type I subfamily. Heterohexadecamer of 8 large chains and 8 small chains; disulfide-linked. The disulfide link is formed within the large subunit homodimers. It depends on Mg(2+) as a cofactor. In terms of processing, the disulfide bond which can form in the large chain dimeric partners within the hexadecamer appears to be associated with oxidative stress and protein turnover.

The protein resides in the plastid. It localises to the chloroplast. The enzyme catalyses 2 (2R)-3-phosphoglycerate + 2 H(+) = D-ribulose 1,5-bisphosphate + CO2 + H2O. The catalysed reaction is D-ribulose 1,5-bisphosphate + O2 = 2-phosphoglycolate + (2R)-3-phosphoglycerate + 2 H(+). RuBisCO catalyzes two reactions: the carboxylation of D-ribulose 1,5-bisphosphate, the primary event in carbon dioxide fixation, as well as the oxidative fragmentation of the pentose substrate in the photorespiration process. Both reactions occur simultaneously and in competition at the same active site. This is Ribulose bisphosphate carboxylase large chain from Anthoceros angustus (Hornwort).